The primary structure comprises 412 residues: Phosphoglycerate kinase (412 aa).

Residues aspartate 26–asparagine 28, arginine 42, histidine 65–arginine 68, arginine 133, and arginine 166 contribute to the substrate site. ATP contacts are provided by residues lysine 217, glycine 308, glutamate 339, and glycine 368–serine 371.

It belongs to the phosphoglycerate kinase family. In terms of assembly, monomer.

The protein resides in the cytoplasm. It carries out the reaction (2R)-3-phosphoglycerate + ATP = (2R)-3-phospho-glyceroyl phosphate + ADP. It participates in carbohydrate degradation; glycolysis; pyruvate from D-glyceraldehyde 3-phosphate: step 2/5. The protein is Phosphoglycerate kinase of Synechococcus sp. (strain JA-3-3Ab) (Cyanobacteria bacterium Yellowstone A-Prime).